The sequence spans 221 residues: Chalcone--flavanone isomerase (221 aa).

Residues threonine 52, asparagine 117, and serine 193 each coordinate substrate.

This sequence belongs to the chalcone isomerase family. Flowers.

It catalyses the reaction a chalcone = a flavanone.. It functions in the pathway secondary metabolite biosynthesis; flavonoid biosynthesis. Its function is as follows. Catalyzes the intramolecular cyclization of bicyclic chalcones into tricyclic (S)-flavanones. Responsible for the isomerization of 4,2',4',6'-tetrahydroxychalcone (also termed chalcone) into naringenin. The chain is Chalcone--flavanone isomerase (CHI) from Gentiana triflora (Clustered gentian).